The following is a 257-amino-acid chain: MMIQLRSEIKTDENLTALFRRQCEAAGLIHDETSPLALVQAAMGEHDWRLELRKLDEPKLGAVFVDFAGGVMAHRRKFGGGRGEAVAKAIGVKGEELPTVIDATAGLGRDAFVLASVGCRVRLVERHPVVRLLLQDGLRRAYDDSEIGESMRRNMQLLTVNHIAELDPARDFADAVYLDPMYPHKQKSALVKKEMRVFQHLVGTDSDADALLEPARKLARKRVVVKRPDYAGFLAQTPPHFSRETKNHRFDIYLPLI.

S-adenosyl-L-methionine is bound by residues 109-110 (RD), 125-126 (ER), and D179.

The protein belongs to the methyltransferase superfamily. RsmJ family.

It is found in the cytoplasm. It catalyses the reaction guanosine(1516) in 16S rRNA + S-adenosyl-L-methionine = N(2)-methylguanosine(1516) in 16S rRNA + S-adenosyl-L-homocysteine + H(+). Specifically methylates the guanosine in position 1516 of 16S rRNA. The protein is Ribosomal RNA small subunit methyltransferase J of Actinobacillus succinogenes (strain ATCC 55618 / DSM 22257 / CCUG 43843 / 130Z).